The sequence spans 547 residues: Flagellar hook-associated protein 1 (547 aa).

It belongs to the flagella basal body rod proteins family.

Its subcellular location is the secreted. The protein localises to the bacterial flagellum. The chain is Flagellar hook-associated protein 1 (flgK) from Escherichia coli (strain K12).